A 196-amino-acid polypeptide reads, in one-letter code: Inosine triphosphate pyrophosphatase 2 (196 aa).

Position 20–25 (20–25) interacts with ITP; the sequence is TGNDGK. E48 serves as a coordination point for Mg(2+). Residues K61, 77–78, K94, 153–156, K177, and 182–183 contribute to the ITP site; these read DT, FGWD, and PR.

This sequence belongs to the HAM1 NTPase family. As to quaternary structure, homodimer. Mg(2+) is required as a cofactor. Mn(2+) serves as cofactor.

It localises to the cytoplasm. The enzyme catalyses ITP + H2O = IMP + diphosphate + H(+). The catalysed reaction is dITP + H2O = dIMP + diphosphate + H(+). It catalyses the reaction XTP + H2O = XMP + diphosphate + H(+). Pyrophosphatase that hydrolyzes non-canonical purine nucleotides such as inosine triphosphate (ITP), deoxyinosine triphosphate (dITP) or xanthosine 5'-triphosphate (XTP) to their respective monophosphate derivatives. The enzyme does not distinguish between the deoxy- and ribose forms. Probably excludes non-canonical purines from RNA and DNA precursor pools, thus preventing their incorporation into RNA and DNA and avoiding chromosomal lesions. In Trypanosoma cruzi (strain CL Brener), this protein is Inosine triphosphate pyrophosphatase 2.